Here is a 240-residue protein sequence, read N- to C-terminus: UDP-2,3-diacylglucosamine hydrolase (240 aa).

The Mn(2+) site is built by D8, H10, D41, N79, and H114. 79–80 (NR) serves as a coordination point for substrate. 5 residues coordinate substrate: D122, S160, N164, K167, and H195. Mn(2+) contacts are provided by H195 and H197.

It belongs to the LpxH family. Requires Mn(2+) as cofactor.

It localises to the cell inner membrane. It carries out the reaction UDP-2-N,3-O-bis[(3R)-3-hydroxytetradecanoyl]-alpha-D-glucosamine + H2O = 2-N,3-O-bis[(3R)-3-hydroxytetradecanoyl]-alpha-D-glucosaminyl 1-phosphate + UMP + 2 H(+). The protein operates within glycolipid biosynthesis; lipid IV(A) biosynthesis; lipid IV(A) from (3R)-3-hydroxytetradecanoyl-[acyl-carrier-protein] and UDP-N-acetyl-alpha-D-glucosamine: step 4/6. Hydrolyzes the pyrophosphate bond of UDP-2,3-diacylglucosamine to yield 2,3-diacylglucosamine 1-phosphate (lipid X) and UMP by catalyzing the attack of water at the alpha-P atom. Involved in the biosynthesis of lipid A, a phosphorylated glycolipid that anchors the lipopolysaccharide to the outer membrane of the cell. In Escherichia coli (strain UTI89 / UPEC), this protein is UDP-2,3-diacylglucosamine hydrolase.